The sequence spans 264 residues: Pimeloyl-[acyl-carrier protein] methyl ester esterase (264 aa).

In terms of domain architecture, AB hydrolase-1 spans 23–244 (LVMLHGWGVN…MLAKASHAPF (222 aa)). Substrate is bound by residues Trp-29, 87 to 88 (SL), and 150 to 154 (FLAIQ). Ser-87 acts as the Nucleophile in catalysis. Active-site residues include Asp-214 and His-241. His-241 provides a ligand contact to substrate.

It belongs to the AB hydrolase superfamily. Carboxylesterase BioH family. As to quaternary structure, monomer.

The protein resides in the cytoplasm. The enzyme catalyses 6-carboxyhexanoyl-[ACP] methyl ester + H2O = 6-carboxyhexanoyl-[ACP] + methanol + H(+). Its pathway is cofactor biosynthesis; biotin biosynthesis. Its function is as follows. The physiological role of BioH is to remove the methyl group introduced by BioC when the pimeloyl moiety is complete. It allows to synthesize pimeloyl-ACP via the fatty acid synthetic pathway through the hydrolysis of the ester bonds of pimeloyl-ACP esters. The chain is Pimeloyl-[acyl-carrier protein] methyl ester esterase from Shewanella sp. (strain MR-7).